Consider the following 489-residue polypeptide: Transcription factor TGAL11 (489 aa).

The span at A87–T99 shows a compositional bias: low complexity. Residues A87–D181 form a disordered region. Residues S121–D139 show a composition bias toward polar residues. Low complexity predominate over residues A148 to Q159. Over residues H171 to D181 the composition is skewed to basic and acidic residues. One can recognise a bZIP domain in the interval D181–R225. The tract at residues K183–K203 is basic motif. Residues L209–L223 are leucine-zipper. A DOG1 domain is found at A245 to R460.

This sequence belongs to the bZIP family.

The protein resides in the nucleus. Transcriptional regulator involved in defense response. The sequence is that of Transcription factor TGAL11 from Oryza sativa subsp. japonica (Rice).